We begin with the raw amino-acid sequence, 141 residues long: Large ribosomal subunit protein uL11 (141 aa).

The protein belongs to the universal ribosomal protein uL11 family. Part of the ribosomal stalk of the 50S ribosomal subunit. Interacts with L10 and the large rRNA to form the base of the stalk. L10 forms an elongated spine to which L12 dimers bind in a sequential fashion forming a multimeric L10(L12)X complex. One or more lysine residues are methylated.

In terms of biological role, forms part of the ribosomal stalk which helps the ribosome interact with GTP-bound translation factors. The protein is Large ribosomal subunit protein uL11 of Clostridium acetobutylicum (strain ATCC 824 / DSM 792 / JCM 1419 / IAM 19013 / LMG 5710 / NBRC 13948 / NRRL B-527 / VKM B-1787 / 2291 / W).